Here is a 451-residue protein sequence, read N- to C-terminus: Tubulin alpha chain (451 aa).

A GTP-binding site is contributed by Gln-11. Lys-40 is modified (N6-acetyllysine). The GTP site is built by Glu-71, Gly-144, Thr-145, Thr-179, Asn-206, and Asn-228. Glu-71 contributes to the Mg(2+) binding site. Glu-254 is an active-site residue.

This sequence belongs to the tubulin family. As to quaternary structure, dimer of alpha and beta chains. A typical microtubule is a hollow water-filled tube with an outer diameter of 25 nm and an inner diameter of 15 nM. Alpha-beta heterodimers associate head-to-tail to form protofilaments running lengthwise along the microtubule wall with the beta-tubulin subunit facing the microtubule plus end conferring a structural polarity. Microtubules usually have 13 protofilaments but different protofilament numbers can be found in some organisms and specialized cells. Mg(2+) is required as a cofactor. Post-translationally, undergoes a tyrosination/detyrosination cycle, the cyclic removal and re-addition of a C-terminal tyrosine residue by the enzymes tubulin tyrosine carboxypeptidase (TTCP) and tubulin tyrosine ligase (TTL), respectively. Acetylation of alpha chains at Lys-40 stabilizes microtubules and affects affinity and processivity of microtubule motors. This modification has a role in multiple cellular functions, ranging from cell motility, cell cycle progression or cell differentiation to intracellular trafficking and signaling.

The protein localises to the cytoplasm. Its subcellular location is the cytoskeleton. The catalysed reaction is GTP + H2O = GDP + phosphate + H(+). Tubulin is the major constituent of microtubules, a cylinder consisting of laterally associated linear protofilaments composed of alpha- and beta-tubulin heterodimers. Microtubules grow by the addition of GTP-tubulin dimers to the microtubule end, where a stabilizing cap forms. Below the cap, tubulin dimers are in GDP-bound state, owing to GTPase activity of alpha-tubulin. This is Tubulin alpha chain (TUBA) from Triticum aestivum (Wheat).